A 280-amino-acid chain; its full sequence is Large ribosomal subunit protein uL2 (280 aa).

The interval 215–280 (GRRPHVRGSA…IQRANDKKEK (66 aa)) is disordered.

The protein belongs to the universal ribosomal protein uL2 family. As to quaternary structure, part of the 50S ribosomal subunit. Forms a bridge to the 30S subunit in the 70S ribosome.

In terms of biological role, one of the primary rRNA binding proteins. Required for association of the 30S and 50S subunits to form the 70S ribosome, for tRNA binding and peptide bond formation. It has been suggested to have peptidyltransferase activity; this is somewhat controversial. Makes several contacts with the 16S rRNA in the 70S ribosome. The sequence is that of Large ribosomal subunit protein uL2 from Dictyoglomus thermophilum (strain ATCC 35947 / DSM 3960 / H-6-12).